The chain runs to 465 residues: Ras-like GTPase YcjX (465 aa).

The short motif at 26 to 33 (GLSRSGKT) is the Walker A motif element. GTP is bound by residues Ser28, Gly31, Lys32, Thr33, Ala34, Trp95, Thr99, and Arg100. GDP contacts are provided by Gly31, Lys32, Thr33, Ala34, Trp95, and Thr99. Lys249 bears the N6-acetyllysine mark. Residues Lys338, Asp340, His341, and Val380 each coordinate GTP. 4 residues coordinate GDP: Lys338, Asp340, His341, and Val380.

To H.influenzae HI_1637. As to quaternary structure, monomer in solution. The cofactor is Mg(2+).

It catalyses the reaction GTP + H2O = GDP + phosphate + H(+). Its activity is regulated as follows. Alternates between an inactive form bound to GDP and an active form bound to GTP. Likely activated by a guanine nucleotide-exchange factor (GEF). In terms of biological role, binds GTP and GDP. Has intrinsic GTPase activity. Does not hydrolyze ATP. May act as a transducer of stress responses. This Escherichia coli (strain K12) protein is Ras-like GTPase YcjX (ycjX).